A 198-amino-acid polypeptide reads, in one-letter code: Protein GrpE (198 aa).

The tract at residues 1 to 32 is disordered; that stretch reads MTTEKETATPADVEVASQEEQIDQTTEAQVEE.

It belongs to the GrpE family. In terms of assembly, homodimer.

The protein localises to the cytoplasm. Participates actively in the response to hyperosmotic and heat shock by preventing the aggregation of stress-denatured proteins, in association with DnaK and GrpE. It is the nucleotide exchange factor for DnaK and may function as a thermosensor. Unfolded proteins bind initially to DnaJ; upon interaction with the DnaJ-bound protein, DnaK hydrolyzes its bound ATP, resulting in the formation of a stable complex. GrpE releases ADP from DnaK; ATP binding to DnaK triggers the release of the substrate protein, thus completing the reaction cycle. Several rounds of ATP-dependent interactions between DnaJ, DnaK and GrpE are required for fully efficient folding. The sequence is that of Protein GrpE from Haemophilus ducreyi (strain 35000HP / ATCC 700724).